We begin with the raw amino-acid sequence, 514 residues long: Peptide chain release factor 3 (514 aa).

In terms of domain architecture, tr-type G spans 8 to 268 (KKRRTFAIIS…TFLEFAPEPH (261 aa)). Residues 17–24 (SHPDAGKT), 85–89 (DTPGH), and 139–142 (NKLD) each bind GTP.

It belongs to the TRAFAC class translation factor GTPase superfamily. Classic translation factor GTPase family. PrfC subfamily.

The protein localises to the cytoplasm. Its function is as follows. Increases the formation of ribosomal termination complexes and stimulates activities of RF-1 and RF-2. It binds guanine nucleotides and has strong preference for UGA stop codons. It may interact directly with the ribosome. The stimulation of RF-1 and RF-2 is significantly reduced by GTP and GDP, but not by GMP. This chain is Peptide chain release factor 3, found in Streptococcus pyogenes serotype M49 (strain NZ131).